The following is a 1443-amino-acid chain: Sterol 3-beta-glucosyltransferase ATG26 (1443 aa).

The segment covering 1–13 (MATQADDAAASQA) has biased composition (low complexity). Disordered regions lie at residues 1-69 (MATQ…MFMN) and 88-187 (NDRF…LTLT). Positions 18–32 (GDLKEHVHDELDKIQ) are enriched in basic and acidic residues. Residues 49–58 (DSEDSDDEDN) show a composition bias toward acidic residues. Over residues 104–117 (QNTRTESIARTSIL) the composition is skewed to polar residues. Over residues 125–134 (DKVHRRRKLS) the composition is skewed to basic residues. Acidic residues predominate over residues 164-173 (EVADEADDEH). The 45-residue stretch at 240-284 (LKEIFEFDEYEQVIEEYPCWLLQSVLLQGYMYITSKHICFYAYLP) folds into the GRAM 1 domain. In terms of domain architecture, PH spans 289-385 (EAVKSGYLSK…WVKSLQRVIF (97 aa)). Residues 463 to 657 (EQVITGDDHD…HGDRHHGIPH (195 aa)) form a disordered region. Residues 506 to 525 (LAPMSPLSPRSPSQLSPRAS) are compositionally biased toward low complexity. Over residues 585-614 (SFLQSSIENPSISTLSPSSYDEPSASQILQ) the composition is skewed to polar residues. Over residues 631–642 (SRKRDRSGKRTP) the composition is skewed to basic residues. The region spanning 765–870 (RFRAHFALPE…DCAVTLHQLM (106 aa)) is the GRAM 2 domain. Positions 883 to 910 (DQEEQDDEEAAAAMAERDELQEARQDEF) form a coiled coil. S957, R958, D960, A1265, H1267, H1280, S1283, G1284, T1285, D1304, and Q1305 together coordinate UDP-alpha-D-glucose. The interval 1385–1443 (NAEHGLAEDDDDTEESWTFVGRDEPDPDAVTKKLSDGLAGLGAAGDRPPPLGSQAPTVA) is disordered. The span at 1405–1419 (GRDEPDPDAVTKKLS) shows a compositional bias: basic and acidic residues.

Belongs to the glycosyltransferase 28 family.

The protein resides in the cytoplasm. It is found in the preautophagosomal structure membrane. The enzyme catalyses a sterol + UDP-alpha-D-glucose = a sterol 3-beta-D-glucoside + UDP + H(+). It catalyses the reaction ergosterol + UDP-alpha-D-glucose = ergosteryl 3-beta-D-glucoside + UDP + H(+). Functionally, sterol glycosyltransferase responsible for the glycosylation of ergosterol to form ergosterol-glucoside. This chain is Sterol 3-beta-glucosyltransferase ATG26, found in Gibberella zeae (strain ATCC MYA-4620 / CBS 123657 / FGSC 9075 / NRRL 31084 / PH-1) (Wheat head blight fungus).